The primary structure comprises 211 residues: MKDKPALRVGIGGPVGSGKTALVEALCKALRDHYEIAVVTNDIYTREDAEFLTRNGALPADRIIGVETGGCPHTAIREDASMNLAAVGDLNQRFPELEVVFIESGGDNLSATFSPELSDLTLYVIDVCAGDKIPRKGGPGITRSDLLVINKIDLAAGVGASLEVMDRDSRRMRGDRPFIFTNLHAGEGLESVIDFIIREGMLDRKPGLAPA.

13 to 20 (GPVGSGKT) is a binding site for GTP.

The protein belongs to the SIMIBI class G3E GTPase family. UreG subfamily. As to quaternary structure, homodimer. UreD, UreF and UreG form a complex that acts as a GTP-hydrolysis-dependent molecular chaperone, activating the urease apoprotein by helping to assemble the nickel containing metallocenter of UreC. The UreE protein probably delivers the nickel.

The protein localises to the cytoplasm. Facilitates the functional incorporation of the urease nickel metallocenter. This process requires GTP hydrolysis, probably effectuated by UreG. The protein is Urease accessory protein UreG of Alkalilimnicola ehrlichii (strain ATCC BAA-1101 / DSM 17681 / MLHE-1).